We begin with the raw amino-acid sequence, 301 residues long: 4-hydroxybenzoate octaprenyltransferase (301 aa).

The next 7 helical transmembrane spans lie at 34–54, 57–77, 108–128, 163–183, 222–242, 248–268, and 280–300; these read IGSL…AGGL, LWTL…GCVI, LWVF…LNWL, WGIP…AWLL, DLIA…LVGL, IAYW…FHIA, and FLHN…SLAL.

It belongs to the UbiA prenyltransferase family. Mg(2+) is required as a cofactor.

The protein resides in the cell inner membrane. It carries out the reaction all-trans-octaprenyl diphosphate + 4-hydroxybenzoate = 4-hydroxy-3-(all-trans-octaprenyl)benzoate + diphosphate. It participates in cofactor biosynthesis; ubiquinone biosynthesis. Catalyzes the prenylation of para-hydroxybenzoate (PHB) with an all-trans polyprenyl group. Mediates the second step in the final reaction sequence of ubiquinone-8 (UQ-8) biosynthesis, which is the condensation of the polyisoprenoid side chain with PHB, generating the first membrane-bound Q intermediate 3-octaprenyl-4-hydroxybenzoate. This Xanthomonas campestris pv. campestris (strain 8004) protein is 4-hydroxybenzoate octaprenyltransferase.